The sequence spans 672 residues: Protein seu-1 (672 aa).

Disordered stretches follow at residues 1–463 (MSSI…AGTE) and 576–672 (LAPP…LKHL). The span at 8–20 (NDNRRPTFRDHRT) shows a compositional bias: basic and acidic residues. Residues 25 to 34 (GRGGSGGGGR) show a composition bias toward gly residues. Residues 62–85 (RSQDHRQRSPEVRRHRSPEKESKD) show a composition bias toward basic and acidic residues. The span at 87–105 (VVTSTGSSRGATSASVTSS) shows a compositional bias: low complexity. 4 stretches are compositionally biased toward basic and acidic residues: residues 107 to 138 (RRHE…DADR), 189 to 226 (VSRH…KSNG), 234 to 268 (RRRE…KVED), and 289 to 306 (EQAK…ESHQ). Low complexity predominate over residues 307 to 317 (SAHSAAVSNAS). The span at 322–343 (SEEELDYEEDDIDVDLDGDIDV) shows a compositional bias: acidic residues. Composition is skewed to basic and acidic residues over residues 366–375 (NDVKDETMEE), 382–396 (PEKK…DDKD), 410–424 (RRED…SDHH), 436–447 (RATDHKESRRSE), 607–626 (SFGD…RHMD), and 636–659 (DHRV…ERGF).

Highly expressed in intestinal cells, lateral hypodermal (seam) cells, Pn.p ventral hypodermal cells, and spermatheca. Expressed at low levels in the ventral nerve cord.

The protein localises to the nucleus. In terms of biological role, together with unc-5, involved in touch neuron axon guidance. During gonad morphogenesis, plays a role in the unc-5-/unc-6-mediated migration of distal tip cells along the body. The protein is Protein seu-1 of Caenorhabditis elegans.